The chain runs to 250 residues: Methylthioribulose-1-phosphate dehydratase (250 aa).

2 residues coordinate Zn(2+): H103 and H105.

The protein belongs to the aldolase class II family. MtnB subfamily. Zn(2+) serves as cofactor.

The catalysed reaction is 5-(methylsulfanyl)-D-ribulose 1-phosphate = 5-methylsulfanyl-2,3-dioxopentyl phosphate + H2O. It functions in the pathway amino-acid biosynthesis; L-methionine biosynthesis via salvage pathway; L-methionine from S-methyl-5-thio-alpha-D-ribose 1-phosphate: step 2/6. Its function is as follows. Catalyzes the dehydration of methylthioribulose-1-phosphate (MTRu-1-P) into 2,3-diketo-5-methylthiopentyl-1-phosphate (DK-MTP-1-P). The protein is Methylthioribulose-1-phosphate dehydratase of Leptospira borgpetersenii serovar Hardjo-bovis (strain JB197).